We begin with the raw amino-acid sequence, 283 residues long: 2-dehydro-3-deoxyphosphooctonate aldolase (283 aa).

It belongs to the KdsA family.

Its subcellular location is the cytoplasm. It catalyses the reaction D-arabinose 5-phosphate + phosphoenolpyruvate + H2O = 3-deoxy-alpha-D-manno-2-octulosonate-8-phosphate + phosphate. Its pathway is carbohydrate biosynthesis; 3-deoxy-D-manno-octulosonate biosynthesis; 3-deoxy-D-manno-octulosonate from D-ribulose 5-phosphate: step 2/3. It participates in bacterial outer membrane biogenesis; lipopolysaccharide biosynthesis. This Methylococcus capsulatus (strain ATCC 33009 / NCIMB 11132 / Bath) protein is 2-dehydro-3-deoxyphosphooctonate aldolase.